A 406-amino-acid chain; its full sequence is Trk system potassium uptake protein trkA homolog 1 (406 aa).

One can recognise an RCK N-terminal 1 domain in the interval 1–124 (MKAVIIGAGE…RAQVGVDLMI (124 aa)). NAD(+)-binding positions include 7 to 11 (GAGEV), D29, 70 to 71 (TG), and R101. An RCK C-terminal domain is found at 144–225 (IDAEMFAEGK…MEDLESVFGS (82 aa)). Residues 230–348 (RTRILLIGCG…FEMVGIDMAV (119 aa)) form the RCK N-terminal 2 domain. 232-262 (RILLIGCGIVGMYLAKLIDKEENADLRIIEH) contacts NAD(+).

In terms of biological role, part of a potassium transport system. This Methanosarcina mazei (Methanosarcina frisia) protein is Trk system potassium uptake protein trkA homolog 1 (trkA1).